A 184-amino-acid polypeptide reads, in one-letter code: Photosystem I assembly protein Ycf4 (184 aa).

The next 2 helical transmembrane spans lie at 22-42 and 57-77; these read FCWAFILFLGSLGFLLVGTSS and IIFFPQGIVMSFYGIAGLFIS.

This sequence belongs to the Ycf4 family.

It is found in the plastid. Its subcellular location is the chloroplast thylakoid membrane. Functionally, seems to be required for the assembly of the photosystem I complex. The protein is Photosystem I assembly protein Ycf4 of Lepidium virginicum (Virginia pepperweed).